We begin with the raw amino-acid sequence, 448 residues long: Homogentisate 1,2-dioxygenase (448 aa).

His303 functions as the Proton acceptor in the catalytic mechanism. Fe cation-binding residues include His346 and Glu352. 2 residues coordinate homogentisate: Tyr361 and His382. Residue His382 participates in Fe cation binding.

It belongs to the homogentisate dioxygenase family. Hexamer; dimer of trimers. Requires Fe cation as cofactor.

The catalysed reaction is homogentisate + O2 = 4-maleylacetoacetate + H(+). The protein operates within amino-acid degradation; L-phenylalanine degradation; acetoacetate and fumarate from L-phenylalanine: step 4/6. Its function is as follows. Involved in the catabolism of homogentisate (2,5-dihydroxyphenylacetate or 2,5-OH-PhAc), a central intermediate in the degradation of phenylalanine and tyrosine. Catalyzes the oxidative ring cleavage of the aromatic ring of homogentisate to yield maleylacetoacetate. In Nitrobacter hamburgensis (strain DSM 10229 / NCIMB 13809 / X14), this protein is Homogentisate 1,2-dioxygenase.